We begin with the raw amino-acid sequence, 137 residues long: MTVIDAEGAILGRLASEVAKRVLRGEEIVIVNAEMVVITGNKDWIIKTYQEEREKKNVANPRRFGPKFPRRPDDILRRTIRKMLPYKKPKGREAFKRVKVYVGNPKNLTVDEKISHKLNTTKYITLAELSKHLGAKF.

It belongs to the universal ribosomal protein uL13 family. Part of the 50S ribosomal subunit.

Its function is as follows. This protein is one of the early assembly proteins of the 50S ribosomal subunit, although it is not seen to bind rRNA by itself. It is important during the early stages of 50S assembly. The chain is Large ribosomal subunit protein uL13 from Methanocaldococcus jannaschii (strain ATCC 43067 / DSM 2661 / JAL-1 / JCM 10045 / NBRC 100440) (Methanococcus jannaschii).